The sequence spans 561 residues: Tectonic-like complex member MKS1 (561 aa).

The C2 B9-type domain occupies 314–442 (LRLFVNGEVV…TVSTWRPMEL (129 aa)).

As to quaternary structure, part of the tectonic-like complex (also named B9 complex). Interacts with TMEM107. Interacts with TCTN3, AHI1, TCTN1, TCTN2, CC2D2A. Interacts with FLNA. Interacts with TMEM67. Interacts with B9D1 and B9D2. As to expression, widely expressed in embryo at 15.5 dpc, with a relatively strong expression in brain, liver, kidney and digits of the upper limbs. Highly expressed in bronchiolar epithelium.

It localises to the cytoplasm. Its subcellular location is the cytoskeleton. The protein localises to the cilium basal body. It is found in the microtubule organizing center. The protein resides in the centrosome. Functionally, component of the tectonic-like complex, a complex localized at the transition zone of primary cilia and acting as a barrier that prevents diffusion of transmembrane proteins between the cilia and plasma membranes. Involved in centrosome migration to the apical cell surface during early ciliogenesis. Required for ciliary structure and function, including a role in regulating length and appropriate number through modulating centrosome duplication. Required for cell branching morphology. The protein is Tectonic-like complex member MKS1 (Mks1) of Mus musculus (Mouse).